A 452-amino-acid polypeptide reads, in one-letter code: Plasminogen-binding protein PgbA (452 aa).

A disordered region spans residues 265–452; it reads QEAIKEPKKA…RRKALEAGKK (188 aa). Composition is skewed to basic and acidic residues over residues 284–310 and 317–373; these read LEEK…DERK and KAME…KEPS. Polar residues predominate over residues 374–391; the sequence is DGNNATQQGEKQNAPKEN. Over residues 392 to 452 the composition is skewed to basic and acidic residues; that stretch reads NAQKEENKPN…RRKALEAGKK (61 aa).

The protein localises to the cell surface. Binds plasminogen, specifically, and in a concentration and lysine-dependent manner. Plasminogen is the precursor of plasmin, a serine protease that cleaves fibrin, fibronectin, laminin and vitronectin. Acquisition of plasminogen/plasmin could enable H.pylori to degrade host components. This is Plasminogen-binding protein PgbA (pgbA) from Helicobacter pylori (strain ATCC 700392 / 26695) (Campylobacter pylori).